The chain runs to 263 residues: Phosphoinositide-3-kinase-interacting protein 1 (263 aa).

The N-terminal stretch at 1–18 (MFGRLYFMLLLSVGLVDC) is a signal peptide. The Extracellular segment spans residues 19-163 (LSVVKDCITN…SGPKKKKDLG (145 aa)). The Kringle domain maps to 24-99 (DCITNNGEDY…KKEACDIRIC (76 aa)). Disulfide bonds link C25-C99, C46-C80, and C69-C94. The N-linked (GlcNAc...) asparagine glycan is linked to N103. A helical membrane pass occupies residues 164-184 (TLGYVLAVFMMAIIILLGGGI). Residues 185 to 263 (TMGYFYKRGR…LMGSAGTPGA (79 aa)) are Cytoplasmic-facing. Residues 239 to 263 (NNQTPTQEPVEGADPLMGSAGTPGA) are disordered.

It is found in the cell membrane. Functionally, negative regulator of hepatic phosphatidylinositol 3-kinase (PI3K) activity. This Danio rerio (Zebrafish) protein is Phosphoinositide-3-kinase-interacting protein 1 (pik3ip1).